A 234-amino-acid chain; its full sequence is Leucyl/phenylalanyl-tRNA--protein transferase (234 aa).

The protein belongs to the L/F-transferase family.

Its subcellular location is the cytoplasm. The enzyme catalyses N-terminal L-lysyl-[protein] + L-leucyl-tRNA(Leu) = N-terminal L-leucyl-L-lysyl-[protein] + tRNA(Leu) + H(+). The catalysed reaction is N-terminal L-arginyl-[protein] + L-leucyl-tRNA(Leu) = N-terminal L-leucyl-L-arginyl-[protein] + tRNA(Leu) + H(+). It catalyses the reaction L-phenylalanyl-tRNA(Phe) + an N-terminal L-alpha-aminoacyl-[protein] = an N-terminal L-phenylalanyl-L-alpha-aminoacyl-[protein] + tRNA(Phe). Functionally, functions in the N-end rule pathway of protein degradation where it conjugates Leu, Phe and, less efficiently, Met from aminoacyl-tRNAs to the N-termini of proteins containing an N-terminal arginine or lysine. The chain is Leucyl/phenylalanyl-tRNA--protein transferase from Shigella sonnei (strain Ss046).